The following is a 258-amino-acid chain: MLAKRIIPCLDVRDGQVVKGVQFRNHEIIGDIVPLAQRYAQEGADELVFYDITASSDGRTVDKSWVERIAQVIDIPFCVAGGIKTIEDAEKLFAFGADKISINSPALADPTLISRLADRFGVQAIVVGIDSWFEQETGKYWVNQYTGDETRTRQTHWQLLDWVKEVQQCGAGEIVLNMMNQDGLRNGYDLAQLKLVRGVCRVPLIASGGAGKMVHFRDAFIEAKVDGALAASVFHKQIIEIGELKSYLVQSAIEIRSE.

Catalysis depends on residues D11 and D130.

Belongs to the HisA/HisF family. As to quaternary structure, heterodimer of HisH and HisF.

The protein localises to the cytoplasm. It catalyses the reaction 5-[(5-phospho-1-deoxy-D-ribulos-1-ylimino)methylamino]-1-(5-phospho-beta-D-ribosyl)imidazole-4-carboxamide + L-glutamine = D-erythro-1-(imidazol-4-yl)glycerol 3-phosphate + 5-amino-1-(5-phospho-beta-D-ribosyl)imidazole-4-carboxamide + L-glutamate + H(+). It participates in amino-acid biosynthesis; L-histidine biosynthesis; L-histidine from 5-phospho-alpha-D-ribose 1-diphosphate: step 5/9. Functionally, IGPS catalyzes the conversion of PRFAR and glutamine to IGP, AICAR and glutamate. The HisF subunit catalyzes the cyclization activity that produces IGP and AICAR from PRFAR using the ammonia provided by the HisH subunit. The polypeptide is Imidazole glycerol phosphate synthase subunit HisF (Haemophilus influenzae (strain 86-028NP)).